The sequence spans 67 residues: Large ribosomal subunit protein uL29 (67 aa).

Belongs to the universal ribosomal protein uL29 family.

The protein is Large ribosomal subunit protein uL29 of Heliobacterium modesticaldum (strain ATCC 51547 / Ice1).